We begin with the raw amino-acid sequence, 698 residues long: MLYIFNSFDNMWVDFIEQTKSFKVSVNNYFYYLNKIKKLFTYLNDLRKHILKKYVYTINHKRIAINYLYFSMVTGLSGAALATMIRMELAHPESPFFKGDSLRYLQVVTAHGLIMVFFVVVPILFGGFANFLIPYHVGSKDVAYPRLNSIGFWIQPCGYILLAKIGFLRPQFWRYYDKTSFSFPFLEKMKYNQYKEYKNDYLFYLDFLKKEITDDHSFFWKARKVIKLPQYSVFSFVPLKLMMWKTMINYPESFWYAASRVVQSRRKKVFVTKCSARTLTTAGWTFITPFSSNIKYTGVGSQDILILSVVFAGISTTISFTNLLITRRTLAMPGMRHRRVLMPFVTISIFLTLRMLATITPVLGAAVIMMAFDRHWQTTFFEYAYGGDPILSQHLFWFFGHPEVYVLIIPTFGFINMIVPHNNTRRVASKHHMIWAIYVMAYMGYLVWGHHMYLVGLDHRSRTMYSTITIMISMPATIKVVNWTLSLVNGALKVDLPFLFSMSFLLLFLVAGFTGMWLSHVSLNVSMHDTFYVVAHFHIMLSGAAITGIFSGFYYYFNALFGIKFSRMFGYMHLIYYSGGQWVAFVPQFYLGFSGMPRRIHDYPVVFMGWHSMSTAGHFITLIGIMFFFLMIFDSHIERRAATSSTLGLPRWYKRISYYIFKIRYLQHNKAKMNGIPGSTVRLMLIDRHFAEFEVFKK.

The chain crosses the membrane as a helical span at residues 65 to 85 (INYLYFSMVTGLSGAALATMI). Residue glutamate 88 coordinates Ca(2+). Histidine 111 contributes to the Fe(II)-heme a binding site. 8 helical membrane-spanning segments follow: residues 113–133 (LIMV…NFLI), 147–167 (LNSI…KIGF), 304–324 (ILIL…TNLL), 349–369 (IFLT…AVIM), 395–415 (LFWF…FGFI), 434–454 (IWAI…HMYL), 468–488 (ITIM…LSLV), and 498–518 (FLFS…GMWL). Residue histidine 401 coordinates Cu cation. Residues 401–405 (HPEVY) constitute a cross-link (1'-histidyl-3'-tyrosine (His-Tyr)). Tyrosine 405 contacts O2. Residues histidine 450 and histidine 451 each coordinate Cu cation. The Mg(2+) site is built by histidine 528 and aspartate 529. 3 consecutive transmembrane segments (helical) span residues 533-553 (VVAH…FSGF), 574-594 (LIYY…LGFS), and 613-633 (MSTA…LMIF). Histidine 536 contacts heme a3. Residue histidine 538 coordinates Fe(II)-heme a.

It belongs to the heme-copper respiratory oxidase family. Component of the cytochrome c oxidase (complex IV, CIV), a multisubunit enzyme composed of a catalytic core of 3 subunits and several supernumerary subunits. The complex exists as a monomer or a dimer and forms supercomplexes (SCs) in the inner mitochondrial membrane with ubiquinol-cytochrome c oxidoreductase (cytochrome b-c1 complex, complex III, CIII). The cofactor is heme. It depends on Cu cation as a cofactor.

It localises to the mitochondrion inner membrane. The catalysed reaction is 4 Fe(II)-[cytochrome c] + O2 + 8 H(+)(in) = 4 Fe(III)-[cytochrome c] + 2 H2O + 4 H(+)(out). Its pathway is energy metabolism; oxidative phosphorylation. Component of the cytochrome c oxidase, the last enzyme in the mitochondrial electron transport chain which drives oxidative phosphorylation. The respiratory chain contains 3 multisubunit complexes succinate dehydrogenase (complex II, CII), ubiquinol-cytochrome c oxidoreductase (cytochrome b-c1 complex, complex III, CIII) and cytochrome c oxidase (complex IV, CIV), that cooperate to transfer electrons derived from NADH and succinate to molecular oxygen, creating an electrochemical gradient over the inner membrane that drives transmembrane transport and the ATP synthase. Cytochrome c oxidase is the component of the respiratory chain that catalyzes the reduction of oxygen to water. Electrons originating from reduced cytochrome c in the intermembrane space (IMS) are transferred via the dinuclear copper A center (CU(A)) of subunit 2 and heme A of subunit 1 to the active site in subunit 1, a binuclear center (BNC) formed by heme A3 and copper B (CU(B)). The BNC reduces molecular oxygen to 2 water molecules using 4 electrons from cytochrome c in the IMS and 4 protons from the mitochondrial matrix. The chain is Cytochrome c oxidase subunit 1 (COI) from Tetrahymena pyriformis.